Reading from the N-terminus, the 374-residue chain is uncharacterized protein (374 aa).

Low complexity predominate over residues Arg86–Arg104. The disordered stretch occupies residues Arg86–Ala109. A Macro domain is found at Trp179–Gly354.

This is an uncharacterized protein from Mycobacterium tuberculosis (strain CDC 1551 / Oshkosh).